Reading from the N-terminus, the 109-residue chain is Cell division protein ZapA (109 aa).

The stretch at Lys71–Arg99 forms a coiled coil.

The protein belongs to the ZapA family. Type 1 subfamily. As to quaternary structure, homodimer. Interacts with FtsZ.

It is found in the cytoplasm. Its function is as follows. Activator of cell division through the inhibition of FtsZ GTPase activity, therefore promoting FtsZ assembly into bundles of protofilaments necessary for the formation of the division Z ring. It is recruited early at mid-cell but it is not essential for cell division. This Serratia proteamaculans (strain 568) protein is Cell division protein ZapA.